A 32-amino-acid polypeptide reads, in one-letter code: Periplasmic [NiFeSe] hydrogenase small subunit (32 aa).

Positions 18 and 21 each coordinate [4Fe-4S] cluster.

The protein belongs to the [NiFe]/[NiFeSe] hydrogenase small subunit family. Heterodimer of a large and a small subunit. It depends on [3Fe-4S] cluster as a cofactor. [4Fe-4S] cluster serves as cofactor.

The protein resides in the periplasm. It catalyses the reaction H2 + A = AH2. The sequence is that of Periplasmic [NiFeSe] hydrogenase small subunit from Desulfomicrobium norvegicum (strain DSM 1741 / NCIMB 8310) (Desulfovibrio baculatus (strain Norway 4)).